The following is a 167-amino-acid chain: Small ribosomal subunit protein uS5 (167 aa).

The 64-residue stretch at 11 to 74 folds into the S5 DRBM domain; sequence LQEKLIAVNR…EKARRAMINV (64 aa).

It belongs to the universal ribosomal protein uS5 family. In terms of assembly, part of the 30S ribosomal subunit. Contacts proteins S4 and S8.

Functionally, with S4 and S12 plays an important role in translational accuracy. Located at the back of the 30S subunit body where it stabilizes the conformation of the head with respect to the body. The sequence is that of Small ribosomal subunit protein uS5 from Yersinia enterocolitica serotype O:8 / biotype 1B (strain NCTC 13174 / 8081).